The primary structure comprises 214 residues: GSVDLQPSLNTSYLNTWALLLTLMATAFTATYSIRMTILVQAGQTRIPPMVSMNENNPLITAPLTRLALGSITAGMIITSFITPTKTPPMTMPLITKTAAILMTILGIILALELSNMTHTLTYPKPNPLMNFSSALGYFNPLVHRFFSKNLLEKGQNIALHLIDLSWLKKMGPEGLAELQVAASKAATSMHTGLIKAYLGSFALSILVMILMTH.

4 consecutive transmembrane segments (helical) span residues 14 to 34, 58 to 78, 92 to 112, and 192 to 212; these read LNTW…TYSI, PLIT…GMII, MPLI…ILAL, and TGLI…MILM.

The protein belongs to the complex I subunit 5 family.

Its subcellular location is the mitochondrion inner membrane. The enzyme catalyses a ubiquinone + NADH + 5 H(+)(in) = a ubiquinol + NAD(+) + 4 H(+)(out). Its function is as follows. Core subunit of the mitochondrial membrane respiratory chain NADH dehydrogenase (Complex I) that is believed to belong to the minimal assembly required for catalysis. Complex I functions in the transfer of electrons from NADH to the respiratory chain. The immediate electron acceptor for the enzyme is believed to be ubiquinone. In Anser caerulescens (Snow goose), this protein is NADH-ubiquinone oxidoreductase chain 5 (MT-ND5).